The sequence spans 166 residues: Putative 4-hydroxy-4-methyl-2-oxoglutarate aldolase (166 aa).

Substrate-binding positions include 74-77 (GDQI) and R96. A divalent metal cation is bound at residue D97.

This sequence belongs to the class II aldolase/RraA-like family. As to quaternary structure, homotrimer. The cofactor is a divalent metal cation.

The catalysed reaction is 4-hydroxy-4-methyl-2-oxoglutarate = 2 pyruvate. The enzyme catalyses oxaloacetate + H(+) = pyruvate + CO2. Functionally, catalyzes the aldol cleavage of 4-hydroxy-4-methyl-2-oxoglutarate (HMG) into 2 molecules of pyruvate. Also contains a secondary oxaloacetate (OAA) decarboxylase activity due to the common pyruvate enolate transition state formed following C-C bond cleavage in the retro-aldol and decarboxylation reactions. The sequence is that of Putative 4-hydroxy-4-methyl-2-oxoglutarate aldolase from Xanthomonas campestris pv. campestris (strain B100).